We begin with the raw amino-acid sequence, 557 residues long: Dihydroxy-acid dehydratase (557 aa).

Position 50 (Cys50) interacts with [2Fe-2S] cluster. Asp82 provides a ligand contact to Mg(2+). Cys123 contacts [2Fe-2S] cluster. Mg(2+)-binding residues include Asp124 and Lys125. Lys125 carries the post-translational modification N6-carboxylysine. Cys195 provides a ligand contact to [2Fe-2S] cluster. Glu447 contributes to the Mg(2+) binding site. The Proton acceptor role is filled by Ser473.

The protein belongs to the IlvD/Edd family. In terms of assembly, homodimer. [2Fe-2S] cluster is required as a cofactor. Requires Mg(2+) as cofactor.

It catalyses the reaction (2R)-2,3-dihydroxy-3-methylbutanoate = 3-methyl-2-oxobutanoate + H2O. It carries out the reaction (2R,3R)-2,3-dihydroxy-3-methylpentanoate = (S)-3-methyl-2-oxopentanoate + H2O. It functions in the pathway amino-acid biosynthesis; L-isoleucine biosynthesis; L-isoleucine from 2-oxobutanoate: step 3/4. Its pathway is amino-acid biosynthesis; L-valine biosynthesis; L-valine from pyruvate: step 3/4. Functions in the biosynthesis of branched-chain amino acids. Catalyzes the dehydration of (2R,3R)-2,3-dihydroxy-3-methylpentanoate (2,3-dihydroxy-3-methylvalerate) into 2-oxo-3-methylpentanoate (2-oxo-3-methylvalerate) and of (2R)-2,3-dihydroxy-3-methylbutanoate (2,3-dihydroxyisovalerate) into 2-oxo-3-methylbutanoate (2-oxoisovalerate), the penultimate precursor to L-isoleucine and L-valine, respectively. The protein is Dihydroxy-acid dehydratase of Burkholderia pseudomallei (strain 1710b).